The primary structure comprises 1943 residues: Trichohyalin (1943 aa).

The interval 1 to 91 is S-100-like; sequence MSPLLRSICD…AQACYYALGQ (91 aa). EF-hand domains are found at residues 23–48 and 49–84; these read CDGAALTKKDLKNLLEREFGAVLRRP and HDPKTVDLILELLDLDSNGRVDFNEFLLFIFKVAQA. 6 residues coordinate Ca(2+): D32, D62, D64, N66, R68, and E73. Disordered regions lie at residues 110-164, 186-209, and 222-274; these read LQDR…LEQR, RRAEEEQLQSCKGHETEEFPDEEQ, and GREE…LQEE. A compositionally biased stretch (basic and acidic residues) spans 197 to 209; the sequence is KGHETEEFPDEEQ. One copy of the 1-1; approximate repeat lies at 314–326; the sequence is RREQQEERREQQE. Residues 314 to 377 are 5 X 13 AA tandem repeats of R-R-E-Q-E-E-E-R-R-E-Q-Q-L; sequence RREQQEERRE…QEEERREQQL (64 aa). One copy of the 1-2; approximate repeat lies at 327–339; the sequence is RREQQEERREQQL. A 1-3; approximate repeat occupies 340–351; it reads RREQEERREQQL. Tandem repeats lie at residues 352 to 364, 365 to 377, 378 to 383, 384 to 389, 390 to 395, 396 to 401, 402 to 407, 408 to 413, 414 to 419, and 420 to 425. The tract at residues 378–425 is 8 X 6 AA tandem repeats of R-R-E-Q-Q-L; sequence RREQQLRREQQLRREQQLRREQQLRREQQLRREQQLRREQQLRREQQL. Residues 425–683 form a 9 X 28 AA approximate tandem repeats region; the sequence is LRREQEEERH…REHEEERREQ (259 aa). Disordered regions lie at residues 426-485, 509-546, 608-819, and 837-872; these read RREQ…EERR, REQEERREQRLKRQEEEERLQQRLRSEQQLRREQEERR, ERLE…EKEQ, and EEQLQRRERAQQLQEEEDGLQEDQERRRSQEQRRDQ. Basic and acidic residues-rich tracts occupy residues 608–684, 724–781, 789–812, and 859–872; these read ERLE…REQE, RKQE…ERGR, PLREQRERQLRAEERQQREQRFLP, and DQERRRSQEQRRDQ. 10 consecutive repeat copies span residues 906–935, 936–965, 966–995, 996–1025, 1026–1055, 1056–1085, 1086–1115, 1116–1145, 1146–1175, and 1176–1204. The interval 906–1204 is 10 X 30 AA tandem repeats; that stretch reads LQEEEEELQR…RERQYREEEE (299 aa). Positions 950-992 are enriched in basic and acidic residues; it reads KRRRQERERQYRKDKKLQQKEEQLLGEEPEKRRRQEREKKYRE. Disordered stretches follow at residues 950–1000, 1046–1120, 1137–1162, 1193–1371, 1404–1435, 1492–1691, 1757–1820, 1834–1864, and 1876–1928; these read KRRR…QQEE, RERQ…QQEE, ERQYREEEEVQQEEEQLLREEPEKRR, QERE…RHQE, REQQLRQDRDRKFREEEQQLSRQERDRKFREE, QQLR…ERDR, PERE…RDGK, EQRLRQERDRQYRAEEQFATQEKSRREEQEL, and RERK…VRSS. Over residues 1052-1064 the composition is skewed to acidic residues; that stretch reads EEEELQQEEEQLL. Composition is skewed to basic and acidic residues over residues 1065 to 1085 and 1092 to 1111; these read GEERETRRRQELERQYRKEEE and QLLREEPEKRRRQERERQCR. Residues 1142 to 1151 show a composition bias toward acidic residues; the sequence is EEEEVQQEEE. Basic and acidic residues predominate over residues 1152-1162; the sequence is QLLREEPEKRR. Basic and acidic residues-rich tracts occupy residues 1214-1263 and 1274-1371; these read YRDE…DRQS and QQER…RHQE. Residues 1292-1894 form a 23 X 26 AA approximate tandem repeats region; it reads HFPEEEQLER…IRRQQKEEQR (603 aa). 3 stretches are compositionally biased toward basic and acidic residues: residues 1492-1524, 1533-1673, and 1682-1691; these read QQLRRQERDRKFREQELRSQEPERKFLEEEQQL, FLQE…REEE, and QQLRRQERDR. The segment covering 1876–1912 has biased composition (basic and acidic residues); that stretch reads RERKLREEHIRRQQKEEQRHRQVGEIKSQEGKGHGRL.

It belongs to the S100-fused protein family. As to quaternary structure, monomer. Substrate of transglutaminase. Some 200 arginines are probably converted to citrullines by peptidylarginine deimidase. Found in the hard keratinizing tissues such as the inner root sheath (IRS) of hair follicles and medulla, and in the filiform papillae of dorsal tongue epithelium.

In terms of biological role, intermediate filament-associated protein that associates in regular arrays with keratin intermediate filaments (KIF) of the inner root sheath cells of the hair follicle and the granular layer of the epidermis. It later becomes cross-linked to KIF by isodipeptide bonds. It may serve as scaffold protein, together with involucrin, in the organization of the cell envelope or even anchor the cell envelope to the KIF network. It may be involved in its own calcium-dependent postsynthetic processing during terminal differentiation. In Homo sapiens (Human), this protein is Trichohyalin (TCHH).